Consider the following 538-residue polypeptide: NAD(P)H-quinone oxidoreductase chain 4 1 (538 aa).

The next 13 membrane-spanning stretches (helical) occupy residues 7–27 (FPWL…IPII), 37–57 (WYGL…FWHY), 88–108 (LSMP…FAAW), 116–136 (LFYG…VAQD), 137–157 (LLLF…LISI), 170–190 (FILY…ALAF), 210–230 (AIEL…LPIF), 244–264 (SAPG…YALI), 278–298 (FAPV…CCAF), 315–335 (MGFV…GAVL), 336–356 (QMVS…VTYE), 388–408 (LALP…GIAT), and 418–438 (VVVV…LLSM).

It belongs to the complex I subunit 4 family.

Its subcellular location is the cellular thylakoid membrane. The enzyme catalyses a plastoquinone + NADH + (n+1) H(+)(in) = a plastoquinol + NAD(+) + n H(+)(out). The catalysed reaction is a plastoquinone + NADPH + (n+1) H(+)(in) = a plastoquinol + NADP(+) + n H(+)(out). NDH-1 shuttles electrons from NAD(P)H, via FMN and iron-sulfur (Fe-S) centers, to quinones in the respiratory chain. The immediate electron acceptor for the enzyme in this species is believed to be plastoquinone. Couples the redox reaction to proton translocation (for every two electrons transferred, four hydrogen ions are translocated across the cytoplasmic membrane), and thus conserves the redox energy in a proton gradient. The sequence is that of NAD(P)H-quinone oxidoreductase chain 4 1 from Nostoc sp. (strain PCC 7120 / SAG 25.82 / UTEX 2576).